The following is a 197-amino-acid chain: Transcription factor FapR (197 aa).

This sequence belongs to the FapR family.

Its function is as follows. Transcriptional factor involved in regulation of membrane lipid biosynthesis by repressing genes involved in fatty acid and phospholipid metabolism. The chain is Transcription factor FapR from Bacillus cereus (strain B4264).